A 522-amino-acid polypeptide reads, in one-letter code: 56 kDa type-specific antigen (522 aa).

A signal peptide spans 1–22; sequence MKKIMLIASAMSALSLPFSASA. Residues 67–87 traverse the membrane as a helical segment; the sequence is LTTMLPFGGTLAAGMTIAPGF. Residues 385-417 form a disordered region; it reads AQEEGDDQSQVSCNDKKQQAVAEDSKAGSSKEG. The segment covering 398-417 has biased composition (basic and acidic residues); that stretch reads NDKKQQAVAEDSKAGSSKEG. A helical membrane pass occupies residues 470 to 490; it reads IGVVASGVLGVAINVADGVCV.

It localises to the cell membrane. In terms of biological role, may be an adherent factor for rickettsial adsorption to the host-cell surface and a determinant of virulence of individual rickettsial strain. It is the major outer membrane protein. The sequence is that of 56 kDa type-specific antigen from Orientia tsutsugamushi (Rickettsia tsutsugamushi).